Consider the following 458-residue polypeptide: Tyrosine phenol-lyase (458 aa).

Lys-258 is modified (N6-(pyridoxal phosphate)lysine).

Belongs to the beta-eliminating lyase family. As to quaternary structure, homotetramer. Pyridoxal 5'-phosphate serves as cofactor.

It catalyses the reaction L-tyrosine + H2O = phenol + pyruvate + NH4(+). The polypeptide is Tyrosine phenol-lyase (tpl) (Pasteurella multocida (strain Pm70)).